Reading from the N-terminus, the 283-residue chain is Ribosomal RNA small subunit methyltransferase A (283 aa).

S-adenosyl-L-methionine contacts are provided by N13, L15, G39, E59, D87, and N108.

The protein belongs to the class I-like SAM-binding methyltransferase superfamily. rRNA adenine N(6)-methyltransferase family. RsmA subfamily.

Its subcellular location is the cytoplasm. The enzyme catalyses adenosine(1518)/adenosine(1519) in 16S rRNA + 4 S-adenosyl-L-methionine = N(6)-dimethyladenosine(1518)/N(6)-dimethyladenosine(1519) in 16S rRNA + 4 S-adenosyl-L-homocysteine + 4 H(+). Specifically dimethylates two adjacent adenosines (A1518 and A1519) in the loop of a conserved hairpin near the 3'-end of 16S rRNA in the 30S particle. May play a critical role in biogenesis of 30S subunits. The sequence is that of Ribosomal RNA small subunit methyltransferase A from Helicobacter hepaticus (strain ATCC 51449 / 3B1).